Here is a 147-residue protein sequence, read N- to C-terminus: Hemoglobin subunit beta-1 (147 aa).

In terms of domain architecture, Globin spans Lys-3–His-147. Heme b-binding residues include His-64 and His-93.

This sequence belongs to the globin family. Hb1 is a heterotetramer of two alpha chains and two beta-1 chains. Red blood cells.

Involved in oxygen transport from gills to the various peripheral tissues. In Cygnodraco mawsoni (Antarctic dragonfish), this protein is Hemoglobin subunit beta-1 (hbb1).